The sequence spans 655 residues: Gastrulation defective protein 1 homolog (655 aa).

Disordered stretches follow at residues 1-54 and 83-165; these read MQRG…EQMI and AKVF…DEQS. 3 stretches are compositionally biased toward basic and acidic residues: residues 23-36, 91-115, and 134-146; these read RSNE…KEST, QIEK…KEDD, and TDKE…SSKD. A compositionally biased stretch (acidic residues) spans 147–164; it reads EDSDDDDYSSDEDSDDEQ. 7 WD repeats span residues 180-219, 227-268, 281-321, 330-369, 377-416, 422-467, and 470-510; these read HGSR…SSMR, CENH…ECCK, GHVA…EQLQ, GLRT…VNTT, QKGS…QPLH, FSRY…EVQR, and VSNA…RGAK. 2 disordered regions span residues 544–580 and 633–655; these read KSRT…VASS and AIFS…EADK. Basic and acidic residues-rich tracts occupy residues 554-564 and 639-655; these read KARMDPVKSQR and LPAD…EADK.

It belongs to the WD repeat GAD-1 family.

This Drosophila melanogaster (Fruit fly) protein is Gastrulation defective protein 1 homolog.